Consider the following 275-residue polypeptide: MAVKKYRPYTPSRRQMTTADFSGLTKKRPEKALTEALPKTGGRNNRGRITSRFIGGGHKRLYRIIDFKRRDKSGVNAKVAAIEYDPNRSARIALLHYADGEKRYILAPEGLTVGATVNAGPEAEPKLGNALPLRFVPVGAVVHALELVPGKGAQLARSAGTSVQVQGKESDYVIVRLPSGELRRVHSECYATIGAVGNAEHKNIVLGKAGRSRWLGRKPHQRGSAMNPVDHPHGGGEGRTGAGRVPVTPWGKPTKGLKTRRKRKTSDRFIVTRRK.

2 disordered regions span residues 1 to 20 (MAVKKYRPYTPSRRQMTTAD) and 214 to 275 (WLGR…TRRK). Positions 255–275 (KGLKTRRKRKTSDRFIVTRRK) are enriched in basic residues.

It belongs to the universal ribosomal protein uL2 family. In terms of assembly, part of the 50S ribosomal subunit. Forms a bridge to the 30S subunit in the 70S ribosome.

In terms of biological role, one of the primary rRNA binding proteins. Required for association of the 30S and 50S subunits to form the 70S ribosome, for tRNA binding and peptide bond formation. It has been suggested to have peptidyltransferase activity; this is somewhat controversial. Makes several contacts with the 16S rRNA in the 70S ribosome. In Deinococcus radiodurans (strain ATCC 13939 / DSM 20539 / JCM 16871 / CCUG 27074 / LMG 4051 / NBRC 15346 / NCIMB 9279 / VKM B-1422 / R1), this protein is Large ribosomal subunit protein uL2 (rplB).